Consider the following 402-residue polypeptide: MNEFPVVLVINCGSSSIKFSVLDVATCDVLMAGIADGMNTENAFLSINGDKPINLAHSNYEDALKAIAFELEKRDLTDSVALIGHRIAHGGELFTQSVIITDEIIDNIRRVSPLAPLHNYANLSGIDAARHLFPAVRQVAVFDTSFHQTLAPEAYLYGLPWEYFSSLGVRRYGFHGTSHRYVSRRAYELLDLDEKDSGLIVAHLGNGASICAVRNGQSVDTSMGMTPLEGLMMGTRSGDVDFGAMAWIAKETGQTLSDLERVVNKESGLLGISGLSSDLRVLEKAWHEGHERARLAIKTFVHRIARHIAGHAASLHRLDGIIFTGGIGENSVLIRQLVIEHLGVLGLTLDVEMNKQPNSHGERIISANPSQVICAVIPTNEEKMIALDAIHLGNVKAPVEFA.

ATP is bound by residues N11 and K18. Residue N11 participates in Mg(2+) binding. R86 lines the substrate pocket. The active-site Proton donor/acceptor is D143. Residues H175, 203–207 (HLGNG), 278–280 (DLR), and 326–330 (GIGEN) contribute to the ATP site.

It belongs to the acetokinase family. TdcD subfamily. Homodimer. It depends on Mg(2+) as a cofactor.

It carries out the reaction propanoate + ATP = propanoyl phosphate + ADP. It functions in the pathway amino-acid degradation; L-threonine degradation via propanoate pathway; propanoate from L-threonine: step 4/4. Its function is as follows. Catalyzes the conversion of propionyl phosphate and ADP to propionate and ATP. The protein is Propionate kinase of Salmonella typhimurium (strain D23580).